A 476-amino-acid polypeptide reads, in one-letter code: Glutamate--tRNA ligase (476 aa).

The 'HIGH' region motif lies at 9–19; that stretch reads PSPTGKLHIGT. Positions 109–129 are enriched in basic and acidic residues; sequence REEQKSRNKPPRYDNRHRSLS. The interval 109 to 133 is disordered; sequence REEQKSRNKPPRYDNRHRSLSTEEE. A 'KMSKS' region motif is present at residues 248 to 252; it reads KLSKR. Residue K251 coordinates ATP.

Belongs to the class-I aminoacyl-tRNA synthetase family. Glutamate--tRNA ligase type 1 subfamily. Monomer.

It is found in the cytoplasm. It catalyses the reaction tRNA(Glu) + L-glutamate + ATP = L-glutamyl-tRNA(Glu) + AMP + diphosphate. In terms of biological role, catalyzes the attachment of glutamate to tRNA(Glu) in a two-step reaction: glutamate is first activated by ATP to form Glu-AMP and then transferred to the acceptor end of tRNA(Glu). This is Glutamate--tRNA ligase from Prochlorococcus marinus (strain MIT 9211).